The following is a 1074-amino-acid chain: Phospholipase D1 (1074 aa).

The region spanning isoleucine 81 to serine 212 is the PX domain. The PH domain occupies proline 219 to arginine 328. 2 S-palmitoyl cysteine lipidation sites follow: cysteine 240 and cysteine 241. Positions tyrosine 459–arginine 486 constitute a PLD phosphodiesterase 1 domain. Residues histidine 463–alanine 928 are catalytic. Phosphoserine occurs at positions 499, 561, and 629. The 28-residue stretch at glutamate 891–serine 918 folds into the PLD phosphodiesterase 2 domain.

Belongs to the phospholipase D family. Interacts with PIP5K1B. In terms of tissue distribution, expressed in kidney, lung, and at a much lower levels, in brain, liver, heart, testis and spleen.

Its subcellular location is the cytoplasm. The protein resides in the perinuclear region. It is found in the endoplasmic reticulum membrane. It localises to the golgi apparatus membrane. The protein localises to the late endosome membrane. The enzyme catalyses a 1,2-diacyl-sn-glycero-3-phosphocholine + H2O = a 1,2-diacyl-sn-glycero-3-phosphate + choline + H(+). The catalysed reaction is ethanol + a 1,2-diacyl-sn-glycero-3-phosphocholine = 1,2-diacyl-sn-glycero-3-phosphoethanol + choline. It carries out the reaction 1,2-dihexadecanoyl-sn-glycero-3-phosphocholine + H2O = 1,2-dihexadecanoyl-sn-glycero-3-phosphate + choline + H(+). With respect to regulation, stimulated by phosphatidylinositol 4,5-bisphosphate and phosphatidylinositol 3,4,5-trisphosphate, activated by the phosphokinase C-alpha, by the ADP-ribosylation factor-1 (ARF-1), and to a lesser extent by GTP-binding proteins: RHO A, RAC-1 and CDC42. Inhibited by oleate. Its function is as follows. Function as phospholipase selectivefor phosphatidylcholine. Implicated as a critical step in numerous cellular pathways, including signal transduction, membrane trafficking, and the regulation of mitosis. May be involved in the regulation of perinuclear intravesicular membrane traffic. This chain is Phospholipase D1, found in Mus musculus (Mouse).